The primary structure comprises 204 residues: MHLMLVLLGLAALLGTSQSRTGCYGDVNRVDTTGASCKSAKPEKLNYCGVAASRKIAERDLQSMDRYKALIKKVGQKLCVDPAVIAGIISRESHAGKALRNGWGDNGNGFGLMQVDRRSHKPVGEWNGERHLMQGTEILISMIKAIQKKFPRWTKEQQLKGGISAYNAGPGNVRSYERMDIGTTHDDYANDVVARAQYYKQHGY.

The first 19 residues, 1-19 (MHLMLVLLGLAALLGTSQS), serve as a signal peptide directing secretion. Cystine bridges form between Cys23-Cys79 and Cys37-Cys48. Active-site residues include Glu92 and Asp105.

This sequence belongs to the glycosyl hydrolase 23 family.

The protein resides in the secreted. The enzyme catalyses Hydrolysis of (1-&gt;4)-beta-linkages between N-acetylmuramic acid and N-acetyl-D-glucosamine residues in a peptidoglycan and between N-acetyl-D-glucosamine residues in chitodextrins.. Has bacteriolytic activity against M.luteus. In Struthio camelus (Common ostrich), this protein is Lysozyme g.